The sequence spans 535 residues: ABC1 family protein C10F6.14c (535 aa).

This sequence belongs to the protein kinase superfamily. ADCK protein kinase family.

The protein is ABC1 family protein C10F6.14c of Schizosaccharomyces pombe (strain 972 / ATCC 24843) (Fission yeast).